The primary structure comprises 70 residues: Turripeptide Pal9.2 (70 aa).

The first 20 residues, M1–G20, serve as a signal peptide directing secretion. A Kazal-like domain is found at Q21–C70. Cystine bridges form between C26/C56, C30/C49, and C38/C70.

It belongs to the conopeptide P-like superfamily. In terms of tissue distribution, expressed by the venom duct.

The protein localises to the secreted. Acts as a neurotoxin by inhibiting an ion channel. May also act as a serine protease inhibitor, since it possess the kazal serine protease inhibitor signature. The sequence is that of Turripeptide Pal9.2 from Polystira albida (White giant-turris).